The primary structure comprises 954 residues: Alpha-xylosidase BoGH31A (954 aa).

An N-terminal signal peptide occupies residues 1 to 20 (MIMNMKNIFYCLLPGLLLGA). Cysteine 21 carries N-palmitoyl cysteine lipidation. A lipid anchor (S-diacylglycerol cysteine) is attached at cysteine 21. Residues 227-366 (TGQEGALTGT…NPEEQGKQSW (140 aa)) enclose the PA14 domain. Catalysis depends on residues aspartate 553 and glutamate 556. Aspartate 630 serves as the catalytic Proton donor.

It belongs to the glycosyl hydrolase 31 family.

It is found in the cell inner membrane. It catalyses the reaction Hydrolysis of terminal, non-reducing alpha-D-xylose residues with release of alpha-D-xylose.. It participates in glucan metabolism; xyloglucan degradation. Functionally, catalyzes the liberation of alpha-xylose from the non-reducing terminal glucose of xyloglucan oligosaccharides in xyloglucan degradation, converting the 'X' to 'G' units. In Bacteroides ovatus (strain ATCC 8483 / DSM 1896 / JCM 5824 / BCRC 10623 / CCUG 4943 / NCTC 11153), this protein is Alpha-xylosidase BoGH31A.